The chain runs to 236 residues: MASEKGPSNKDYTLRRRIEPWEFEVFFDPQELRKEACLLYEIKWGASSKTWRSSGKNTTNHVEVNFLEKLTSEGRLGPSTCCSITWFLSWSPCWECSMAIREFLSQHPGVTLIIFVARLFQHMDRRNRQGLKDLVTSGVTVRVMSVSEYCYCWENFVNYPPGKAAQWPRYPPRWMLMYALELYCIILGLPPCLKISRRHQKQLTFFSLTPQYCHYKMIPPYILLATGLLQPSVPWR.

Residues 10-134 (KDYTLRRRIE…RRNRQGLKDL (125 aa)) form the CMP/dCMP-type deaminase domain. Histidine 61 is a Zn(2+) binding site. The active-site Proton donor is the glutamate 63. Cysteine 93 and cysteine 96 together coordinate Zn(2+).

Belongs to the cytidine and deoxycytidylate deaminase family. Homodimer. Interacts with A1CF; form an mRNA editing complex. Interacts with RBM47; form an mRNA editing complex. Found in a complex with CELF2/CUGBP2 and A1CF. Interacts with HNRPAB. Interacts with SYNCRIP. Zn(2+) serves as cofactor. As to expression, expressed exclusively in the intestine.

It localises to the cytoplasm. It is found in the nucleus. It catalyses the reaction a cytidine in mRNA + H2O + H(+) = a uridine in mRNA + NH4(+). It carries out the reaction cytidine(6666) in apoB mRNA + H2O + H(+) = uridine(6666) in apoB mRNA + NH4(+). Functionally, cytidine deaminase catalyzing the cytidine to uridine postranscriptional editing of a variety of mRNAs. Form complexes with cofactors that confer differential editing activity and selectivity. Responsible for the postranscriptional editing of a CAA codon for Gln to a UAA codon for stop in the apolipoprotein B mRNA. Also involved in CGA (Arg) to UGA (Stop) editing in the NF1 mRNA. May also play a role in the epigenetic regulation of gene expression by participating in DNA demethylation. The protein is C-&gt;U-editing enzyme APOBEC-1 of Oryctolagus cuniculus (Rabbit).